Reading from the N-terminus, the 215-residue chain is Extracellular small neutral protease (215 aa).

The N-terminal stretch at 1-30 (MRMTRAASALAGLGLAVAAALGSVAPASAA) is a signal peptide. Thr-152 serves as a coordination point for Ca(2+). Zn(2+) is bound at residue His-157. Glu-158 is an active-site residue. Residues His-161 and Asp-167 each coordinate Zn(2+). A disulfide bridge connects residues Cys-173 and Cys-186.

It belongs to the peptidase M7 family. The cofactor is Zn(2+).

Its subcellular location is the secreted. The enzyme catalyses Hydrolyzes proteins with a preference for Tyr or Phe in the P1' position. Has no action on amino-acid p-nitroanilides.. The polypeptide is Extracellular small neutral protease (snpA) (Streptomyces coelicolor).